The following is a 254-amino-acid chain: Imidazole glycerol phosphate synthase subunit HisF (254 aa).

Catalysis depends on residues aspartate 11 and aspartate 130.

This sequence belongs to the HisA/HisF family. Heterodimer of HisH and HisF.

It localises to the cytoplasm. The enzyme catalyses 5-[(5-phospho-1-deoxy-D-ribulos-1-ylimino)methylamino]-1-(5-phospho-beta-D-ribosyl)imidazole-4-carboxamide + L-glutamine = D-erythro-1-(imidazol-4-yl)glycerol 3-phosphate + 5-amino-1-(5-phospho-beta-D-ribosyl)imidazole-4-carboxamide + L-glutamate + H(+). It participates in amino-acid biosynthesis; L-histidine biosynthesis; L-histidine from 5-phospho-alpha-D-ribose 1-diphosphate: step 5/9. In terms of biological role, IGPS catalyzes the conversion of PRFAR and glutamine to IGP, AICAR and glutamate. The HisF subunit catalyzes the cyclization activity that produces IGP and AICAR from PRFAR using the ammonia provided by the HisH subunit. The protein is Imidazole glycerol phosphate synthase subunit HisF of Solibacter usitatus (strain Ellin6076).